The chain runs to 511 residues: Vesicular acetylcholine transporter (511 aa).

Residues 1–36 (MAVGQAKAAMGKISSAIGERSKRISGAMNEPRRKRK) lie on the Cytoplasmic side of the membrane. A helical transmembrane segment spans residues 37–57 (ILLVIVCIAMLLDNMLYMVIV). The Lumenal, vesicle segment spans residues 58-108 (PIIPNYLETIRTYKLVYITTPSNGTNGSLLNSTQRAVLERNPNANEDIQIG). Residues Asn-80, Asn-83, and Asn-88 are each glycosylated (N-linked (GlcNAc...) asparagine). Residues 109–129 (VLFASKAILQLLSNPFTGTFI) traverse the membrane as a helical segment. At 130–135 (DRVGYD) the chain is on the cytoplasmic side. A helical membrane pass occupies residues 136–156 (IPLLIGLTIMFFSTITFAFGE). Residues 157 to 165 (SYAILFAAR) are Lumenal, vesicle-facing. A helical membrane pass occupies residues 166-186 (SLQGLGSAFADTSGIAMIADK). Over 187–197 (YTEESERTQAL) the chain is Cytoplasmic. A helical membrane pass occupies residues 198 to 218 (GIALAFISFGSLVAPPFGGVL). Over 219 to 225 (YQFAGKW) the chain is Lumenal, vesicle. The helical transmembrane segment at 226-246 (VPFLVLSFVCLLDGILLLMVV) threads the bilayer. At 247-267 (TPFASRTRVNTLQGTPIYKLM) the chain is on the cytoplasmic side. The helical transmembrane segment at 268–288 (IDPYIAVVAGALTTCNIPLAF) threads the bilayer. The Lumenal, vesicle portion of the chain corresponds to 289-306 (LEPTISNWMKKTMNASEW). N-linked (GlcNAc...) asparagine glycosylation occurs at Asn-302. The chain crosses the membrane as a helical span at residues 307-327 (QMGITWLPAFFPHILGVYITV). At 328–337 (KLAAKYPNYQ) the chain is on the cytoplasmic side. A helical membrane pass occupies residues 338-358 (WLYGAVGLVIIGASSCTIPAC). At 359 to 363 (RNFEE) the chain is on the lumenal, vesicle side. A helical membrane pass occupies residues 364 to 384 (LIIPLCALCFGIALVDTALLP). Over 385–400 (TLAFLVDIRYVSVYGS) the chain is Cytoplasmic. Residues 401 to 421 (VYAIADISYSVAYALGPIMAG) traverse the membrane as a helical segment. The Lumenal, vesicle portion of the chain corresponds to 422-428 (QIVHDLG). A helical membrane pass occupies residues 429 to 449 (FVQLNLGMGLVNILYAPGLLF). At 450-511 (LRNVCQMKPS…VLSDQEGYSE (62 aa)) the chain is on the cytoplasmic side. A disordered region spans residues 485–511 (EAKEPHGTSSGNHSVHAVLSDQEGYSE).

Belongs to the major facilitator superfamily. Vesicular transporter family. In terms of tissue distribution, high expression in the electric lobe of the brain.

Its subcellular location is the membrane. Involved in acetylcholine transport into synaptic vesicles. The sequence is that of Vesicular acetylcholine transporter from Torpedo marmorata (Marbled electric ray).